The chain runs to 438 residues: Adenylosuccinate synthetase (438 aa).

Residues 13-19 (GDEGKGK) and 41-43 (GHT) each bind GTP. The active-site Proton acceptor is the aspartate 14. Aspartate 14 and glycine 41 together coordinate Mg(2+). IMP is bound by residues 14–17 (DEGK), 39–42 (NAGH), threonine 130, arginine 144, glutamine 225, threonine 240, and arginine 310. The active-site Proton donor is histidine 42. 306–312 (ATTGRLR) is a binding site for substrate. GTP is bound by residues arginine 312, 338–340 (KLD), and 421–423 (STG).

This sequence belongs to the adenylosuccinate synthetase family. As to quaternary structure, homodimer. The cofactor is Mg(2+).

It is found in the cytoplasm. The enzyme catalyses IMP + L-aspartate + GTP = N(6)-(1,2-dicarboxyethyl)-AMP + GDP + phosphate + 2 H(+). It functions in the pathway purine metabolism; AMP biosynthesis via de novo pathway; AMP from IMP: step 1/2. Functionally, plays an important role in the de novo pathway of purine nucleotide biosynthesis. Catalyzes the first committed step in the biosynthesis of AMP from IMP. This chain is Adenylosuccinate synthetase, found in Aliivibrio fischeri (strain ATCC 700601 / ES114) (Vibrio fischeri).